We begin with the raw amino-acid sequence, 586 residues long: DNA-directed RNA polymerase subunit beta' (586 aa).

4 residues coordinate Zn(2+): Cys64, Cys66, Cys85, and Cys88. Mg(2+) contacts are provided by Asp448, Asp450, and Asp452.

It belongs to the RNA polymerase beta' chain family. RpoC1 subfamily. In terms of assembly, in plastids the minimal PEP RNA polymerase catalytic core is composed of four subunits: alpha, beta, beta', and beta''. When a (nuclear-encoded) sigma factor is associated with the core the holoenzyme is formed, which can initiate transcription. The cofactor is Mg(2+). It depends on Zn(2+) as a cofactor.

The protein localises to the plastid. Its subcellular location is the chloroplast. It catalyses the reaction RNA(n) + a ribonucleoside 5'-triphosphate = RNA(n+1) + diphosphate. Its function is as follows. DNA-dependent RNA polymerase catalyzes the transcription of DNA into RNA using the four ribonucleoside triphosphates as substrates. This chain is DNA-directed RNA polymerase subunit beta', found in Euglena gracilis.